Here is a 143-residue protein sequence, read N- to C-terminus: Large ribosomal subunit protein uL16 (143 aa).

The protein belongs to the universal ribosomal protein uL16 family. As to quaternary structure, part of the 50S ribosomal subunit.

In terms of biological role, binds 23S rRNA and is also seen to make contacts with the A and possibly P site tRNAs. This Thermosynechococcus vestitus (strain NIES-2133 / IAM M-273 / BP-1) protein is Large ribosomal subunit protein uL16.